The following is a 515-amino-acid chain: 1-pyrroline-5-carboxylate dehydrogenase 2 (515 aa).

Catalysis depends on residues E286 and C320.

The protein belongs to the aldehyde dehydrogenase family. RocA subfamily.

It catalyses the reaction L-glutamate 5-semialdehyde + NAD(+) + H2O = L-glutamate + NADH + 2 H(+). The protein operates within amino-acid degradation; L-proline degradation into L-glutamate; L-glutamate from L-proline: step 2/2. This is 1-pyrroline-5-carboxylate dehydrogenase 2 (rocA2) from Halalkalibacterium halodurans (strain ATCC BAA-125 / DSM 18197 / FERM 7344 / JCM 9153 / C-125) (Bacillus halodurans).